A 145-amino-acid chain; its full sequence is Zinc finger C2H2 protein ECU06_1150 (145 aa).

The segment at 35-57 adopts a C2H2-type 1; atypical zinc-finger fold; sequence KDCARYGEAQASKHALLAHARRH. A C2H2-type 2 zinc finger spans residues 63 to 85; sequence FECHLCGKDYTRSDPLKKHLLRH.

The chain is Zinc finger C2H2 protein ECU06_1150 from Encephalitozoon cuniculi (strain GB-M1) (Microsporidian parasite).